The sequence spans 60 residues: Metallothionein (60 aa).

Met1 bears the N-acetylmethionine mark. The beta stretch occupies residues 1-28 (MDPCECSKTGTCNCGGSCTCKNCSCTTC). Residues Cys4, Cys6, Cys12, Cys14, Cys18, Cys20, Cys23, Cys25, Cys28, Cys32, Cys33, Cys35, Cys36, Cys40, Cys43, Cys47, Cys49, Cys54, Cys58, and Cys59 each contribute to the a divalent metal cation site. The tract at residues 29-60 (TKSCCPCCPSGCPKCASGCVCKGKTCDTTCCQ) is alpha.

Belongs to the metallothionein superfamily. Type 1 family.

In terms of biological role, metallothioneins have a high content of cysteine residues that bind various heavy metals. This Pseudopleuronectes americanus (Winter flounder) protein is Metallothionein (mt).